A 510-amino-acid chain; its full sequence is Ferredoxin--nitrite reductase (510 aa).

Residues Cys-396, Cys-402, Cys-437, and Cys-441 each contribute to the [4Fe-4S] cluster site. Position 441 (Cys-441) interacts with siroheme.

The protein belongs to the nitrite and sulfite reductase 4Fe-4S domain family.

It carries out the reaction 6 oxidized [2Fe-2S]-[ferredoxin] + NH4(+) + 2 H2O = nitrite + 6 reduced [2Fe-2S]-[ferredoxin] + 8 H(+). This chain is Ferredoxin--nitrite reductase (nirA), found in Leptolyngbya laminosa (Phormidium laminosum).